The primary structure comprises 419 residues: UDP-N-acetylglucosamine 1-carboxyvinyltransferase 2 (419 aa).

Residue lysine 22–asparagine 23 coordinates phosphoenolpyruvate. Residue arginine 92 participates in UDP-N-acetyl-alpha-D-glucosamine binding. Cysteine 116 functions as the Proton donor in the catalytic mechanism. Cysteine 116 is modified (2-(S-cysteinyl)pyruvic acid O-phosphothioketal). UDP-N-acetyl-alpha-D-glucosamine-binding positions include arginine 121–leucine 125, aspartate 306, and isoleucine 328.

This sequence belongs to the EPSP synthase family. MurA subfamily.

It is found in the cytoplasm. It catalyses the reaction phosphoenolpyruvate + UDP-N-acetyl-alpha-D-glucosamine = UDP-N-acetyl-3-O-(1-carboxyvinyl)-alpha-D-glucosamine + phosphate. It participates in cell wall biogenesis; peptidoglycan biosynthesis. In terms of biological role, cell wall formation. Adds enolpyruvyl to UDP-N-acetylglucosamine. The polypeptide is UDP-N-acetylglucosamine 1-carboxyvinyltransferase 2 (Streptococcus pyogenes serotype M1).